The following is a 274-amino-acid chain: MNKTAIALLALLASSASLAATPWQKITQPVPGSAQSIGSFSNGCIVGADTLPIQSEHYQVMRTDQRRYFGHPDLVMFIQRLSSQVSNLGMGTVLIGDMGMPAGGRFNGGHASHQTGLDVDIFLQLPKTRWTSAQLLRPQALDLVSRDGKHVVSTLWKPEIFSLIKLAAQDKDVTRIFVNPAIKQQLCLDAGTDRDWLRKVRPWFQHRAHMHVRLRCPADSLECEDQPLPPSGDGCGAELQSWFEPPKPGTTKPEKKTPPPLPPSCQALLDEHVI.

The N-terminal stretch at methionine 1 to alanine 19 is a signal peptide. 3 disulfide bridges follow: cysteine 44–cysteine 265, cysteine 187–cysteine 235, and cysteine 216–cysteine 223. The Zn(2+) site is built by histidine 110, histidine 113, aspartate 120, aspartate 147, histidine 150, and histidine 211. Residues leucine 228–isoleucine 274 are disordered.

The protein belongs to the peptidase M74 family. Dimer. It depends on Zn(2+) as a cofactor.

The protein resides in the periplasm. With respect to regulation, inhibited by Zn(2+) at 10 mM and by metal chelating agents EDTA and 1,10-phenanthroline. Its function is as follows. Murein endopeptidase that cleaves the D-alanyl-meso-2,6-diamino-pimelyl amide bond that connects peptidoglycan strands. Likely plays a role in the removal of murein from the sacculus and could also play a role in the integration of nascent murein strands into the sacculus. In Escherichia coli (strain K12), this protein is Penicillin-insensitive murein endopeptidase (mepA).